The primary structure comprises 442 residues: UDP-glycosyltransferase 79B7 (442 aa).

UDP-alpha-D-glucose is bound by residues Ser260, 319–321, 336–344, and 358–361; these read VQQ, HCGPGTIWE, and LSDQ.

Belongs to the UDP-glycosyltransferase family.

The polypeptide is UDP-glycosyltransferase 79B7 (UGT79B7) (Arabidopsis thaliana (Mouse-ear cress)).